The chain runs to 426 residues: Protein FAM181B (426 aa).

Disordered regions lie at residues 106–157 (GLMG…AAAA) and 226–246 (NLPPSFFTEPSRAGGGGCGPS). Residues 128 to 141 (PLAAPSAPTVAAPA) show a composition bias toward low complexity.

It belongs to the FAM181 family.

The chain is Protein FAM181B (FAM181B) from Homo sapiens (Human).